A 406-amino-acid chain; its full sequence is Putative F-box protein At5g38270 (406 aa).

In terms of domain architecture, F-box spans histidine 20–arginine 67.

In Arabidopsis thaliana (Mouse-ear cress), this protein is Putative F-box protein At5g38270.